The chain runs to 274 residues: Penicillin-insensitive murein endopeptidase (274 aa).

The signal sequence occupies residues 1-19; the sequence is MNKTAIALLALLASSASLA. 3 cysteine pairs are disulfide-bonded: Cys-44-Cys-265, Cys-187-Cys-235, and Cys-216-Cys-223. 6 residues coordinate Zn(2+): His-110, His-113, Asp-120, Asp-147, His-150, and His-211. Residues 228-264 are disordered; it reads LPPPGDGCGAELQSWFAPPKPGTTKPEKKTPSPLPPS.

The protein belongs to the peptidase M74 family. In terms of assembly, dimer. Zn(2+) serves as cofactor.

It localises to the periplasm. In terms of biological role, murein endopeptidase that cleaves the D-alanyl-meso-2,6-diamino-pimelyl amide bond that connects peptidoglycan strands. Likely plays a role in the removal of murein from the sacculus. The polypeptide is Penicillin-insensitive murein endopeptidase (Escherichia coli (strain 55989 / EAEC)).